The following is a 197-amino-acid chain: Fucoxanthin-chlorophyll a-c binding protein C, chloroplastic (197 aa).

The N-terminal 31 residues, 1 to 31 (MKTAVIASLIAGAAAFAPAKNAARTSVATNM), are a transit peptide targeting the chloroplast. The next 3 membrane-spanning stretches (helical) occupy residues 73–94 (ISMLAVVGYLVQEAGVRLPGTI), 113–133 (IPAGGLVQLLFFIGVLESSVM), and 174–196 (GRAAQMGILAFMVHEQLGVSLLP).

Belongs to the fucoxanthin chlorophyll protein family. As to quaternary structure, the LHC complex of chromophytic algae is composed of fucoxanthin, chlorophyll A and C bound non-covalently by fucoxanthin chlorophyll proteins (FCPs). The ratio of the pigments in LHC; fucoxanthin: chlorophyll C: chlorophyll A; (0.6-1): (0.1-0.3): (1).

The protein resides in the plastid. It is found in the chloroplast thylakoid membrane. Its function is as follows. The light-harvesting complex (LHC) functions as a light receptor, it captures and delivers excitation energy to photosystems with which it is closely associated. Energy is transferred from the carotenoid and chlorophyll C (or B) to chlorophyll A and the photosynthetic reaction centers where it is used to synthesize ATP and reducing power. The chain is Fucoxanthin-chlorophyll a-c binding protein C, chloroplastic (FCPC) from Phaeodactylum tricornutum (Diatom).